The sequence spans 366 residues: N-methyltransferase fsqC (366 aa).

Positions 1–18 (MSSNVQDIRGWPPPFANA) are cleaved as a signal peptide. Asn270 is a glycosylation site (N-linked (GlcNAc...) asparagine).

Belongs to the methyltransferase superfamily.

Its pathway is secondary metabolite biosynthesis. In terms of biological role, N-methyltransferase; part of the gene cluster that mediates the biosynthesis of the isoquinoline alkaloids fumisoquin A, fumisoquin B and fumisoquin C; as well as small amounts of fumipyrrole as a shunt metabolite. The products of the cluster lead to a brown coloration and are important for growth and conidiation. The nonribosomal peptide synthetase-like protein fsqF, which lacks a canonical condensation domain, is required for addition of a serine-derived dehydroalanine moiety to activated tyrosine but is not essential for the subsequent steps leading to isoquinoline formation. A different enzyme, most likely the ATP-grasp enzyme fsqD, is responsible for activation of tyrosine. Three additional enzymes encoded by the fsq cluster, the N-methyltransferase fsqC, the phenol 2-monooxygenase fsqG and the FAD-dependent oxidase fsqB, catalyze the formation of the isoquinoline ring system in the fumisoquins. FsqB converts the fspF thiolation domain-bound (2S,4S,5S)-2-amino-6-(3,4-dihydroxyphenyl)-4-hydroxy-5-(methylamino)hexanoyl into isoquinoline. The cyclization most likely proceeds via a two-step mechanism, beginning with FAD-dependent oxidation of the methyl group to an iminium species followed by electrophilic attack on the deprotonated phenol. The polypeptide is N-methyltransferase fsqC (Aspergillus fumigatus (strain ATCC MYA-4609 / CBS 101355 / FGSC A1100 / Af293) (Neosartorya fumigata)).